The following is a 152-amino-acid chain: UPF0178 protein YPTS_2857 (152 aa).

The protein belongs to the UPF0178 family.

The chain is UPF0178 protein YPTS_2857 from Yersinia pseudotuberculosis serotype IB (strain PB1/+).